A 534-amino-acid chain; its full sequence is uncharacterized protein (534 aa).

The signal sequence occupies residues M1–A22. Residue N31 is glycosylated (N-linked (GlcNAc...) asparagine). Disordered regions lie at residues P70–S145 and S176–P418. N426 is a glycosylation site (N-linked (GlcNAc...) asparagine).

Its subcellular location is the endoplasmic reticulum. It localises to the cell membrane. This is an uncharacterized protein from Schizosaccharomyces pombe (strain 972 / ATCC 24843) (Fission yeast).